A 335-amino-acid polypeptide reads, in one-letter code: MMSVNRFTSGRLPVFLRKSPFYYSRAYLHQTCVFKQNKETAQDSPELLAKSSHLNSKPLDVSNKAPVKTAQNKIPLAHSKYESSKYELPKWKEALGELVIRAFHLDMDRVRAGPVAGSYYYKICKEQGLQYEDEPLSETAKYFYEDLKLPRTFSQWFQITVLHEWILFVRMRAMPFKYGRNYQQKLVDRTFSDIELRLFEEMKVNSGRIADQYLKDFNTQLRGAIFAYDEGFATDDGTLATAVWRNLFGGRKNIDMVHLESVVRYIYSQLYVLSRLSDREFATGKFKFVPPGVKVEKLTPKQEEELKAKTIAKYEALDKDPKTLPSERSRLSYTN.

The transit peptide at 1–38 directs the protein to the mitochondrion; the sequence is MMSVNRFTSGRLPVFLRKSPFYYSRAYLHQTCVFKQNK. The helical transmembrane segment at 152–169 threads the bilayer; sequence TFSQWFQITVLHEWILFV.

The protein belongs to the CBP3 family.

It is found in the mitochondrion membrane. Functionally, chaperone required for the assembly of ubiquinol-cytochrome c reductase of the mitochondrial respiratory chain. The chain is Protein CBP3, mitochondrial (CBP3) from Saccharomyces cerevisiae (strain ATCC 204508 / S288c) (Baker's yeast).